The following is a 527-amino-acid chain: Peptide chain release factor 3 (527 aa).

The tr-type G domain maps to 9–277; it reads AKRRTFAIIS…AVVDWAPRPL (269 aa). GTP is bound by residues 18–25, 86–90, and 140–143; these read SHPDAGKT, DTPGH, and NKLD.

This sequence belongs to the TRAFAC class translation factor GTPase superfamily. Classic translation factor GTPase family. PrfC subfamily.

The protein localises to the cytoplasm. Functionally, increases the formation of ribosomal termination complexes and stimulates activities of RF-1 and RF-2. It binds guanine nucleotides and has strong preference for UGA stop codons. It may interact directly with the ribosome. The stimulation of RF-1 and RF-2 is significantly reduced by GTP and GDP, but not by GMP. This Pseudomonas putida (strain W619) protein is Peptide chain release factor 3.